The chain runs to 223 residues: Adenylate kinase (223 aa).

Gly-10–Thr-15 contacts ATP. The tract at residues Ser-30–Ile-59 is NMP. Residues Thr-31, Arg-36, Lys-57 to Ile-59, Gly-85 to Arg-88, and Gln-92 contribute to the AMP site. The tract at residues Gly-126–Asp-163 is LID. Position 127 (Arg-127) interacts with ATP. Zn(2+) is bound by residues Cys-130, Cys-133, Cys-150, and Cys-153. Residues Arg-160 and Arg-172 each contribute to the AMP site. Residue Leu-200 coordinates ATP.

This sequence belongs to the adenylate kinase family. Monomer.

The protein localises to the cytoplasm. It catalyses the reaction AMP + ATP = 2 ADP. It participates in purine metabolism; AMP biosynthesis via salvage pathway; AMP from ADP: step 1/1. In terms of biological role, catalyzes the reversible transfer of the terminal phosphate group between ATP and AMP. Plays an important role in cellular energy homeostasis and in adenine nucleotide metabolism. The polypeptide is Adenylate kinase (Zymomonas mobilis subsp. mobilis (strain ATCC 31821 / ZM4 / CP4)).